The chain runs to 447 residues: NADP-specific glutamate dehydrogenase (447 aa).

Positions 92, 113, and 116 each coordinate substrate. Lysine 128 (proton donor) is an active-site residue. Position 167 (glycine 167) interacts with substrate. NADP(+)-binding residues include threonine 212 and asparagine 243. Residue serine 379 coordinates substrate.

It belongs to the Glu/Leu/Phe/Val dehydrogenases family. As to quaternary structure, homohexamer.

The enzyme catalyses L-glutamate + NADP(+) + H2O = 2-oxoglutarate + NH4(+) + NADPH + H(+). Its function is as follows. Catalyzes the reversible oxidative deamination of glutamate to alpha-ketoglutarate and ammonia. The polypeptide is NADP-specific glutamate dehydrogenase (gdh) (Corynebacterium efficiens (strain DSM 44549 / YS-314 / AJ 12310 / JCM 11189 / NBRC 100395)).